A 511-amino-acid chain; its full sequence is Bifunctional purine biosynthesis protein PurH (511 aa).

The MGS-like domain occupies 1–145; that stretch reads MKKRALVSVS…KNHKFVSVIV (145 aa).

The protein belongs to the PurH family.

It carries out the reaction (6R)-10-formyltetrahydrofolate + 5-amino-1-(5-phospho-beta-D-ribosyl)imidazole-4-carboxamide = 5-formamido-1-(5-phospho-D-ribosyl)imidazole-4-carboxamide + (6S)-5,6,7,8-tetrahydrofolate. It catalyses the reaction IMP + H2O = 5-formamido-1-(5-phospho-D-ribosyl)imidazole-4-carboxamide. The protein operates within purine metabolism; IMP biosynthesis via de novo pathway; 5-formamido-1-(5-phospho-D-ribosyl)imidazole-4-carboxamide from 5-amino-1-(5-phospho-D-ribosyl)imidazole-4-carboxamide (10-formyl THF route): step 1/1. It functions in the pathway purine metabolism; IMP biosynthesis via de novo pathway; IMP from 5-formamido-1-(5-phospho-D-ribosyl)imidazole-4-carboxamide: step 1/1. The sequence is that of Bifunctional purine biosynthesis protein PurH from Bacillus cereus (strain 03BB102).